Reading from the N-terminus, the 141-residue chain is MAARLCCQLDSARDVLLLRPIGPQSSGPPFPRPAAGSAASSASSPSPSDESDLPLGRLPACFASASGPCCLVFTCADLRTMDSTVNFVSWHAKRQLGMPSKDLWTPYIKDQLLTKWEEGSIDPRLSIFVLGGCRHKCMRLL.

Residues 22 to 52 (GPQSSGPPFPRPAAGSAASSASSPSPSDESD) are disordered. The span at 33-48 (PAAGSAASSASSPSPS) shows a compositional bias: low complexity. A mitochondrial targeting sequence region spans residues 68–113 (PCCLVFTCADLRTMDSTVNFVSWHAKRQLGMPSKDLWTPYIKDQLL).

This sequence belongs to the orthohepadnavirus protein X family. As to quaternary structure, may form homodimer. May interact with host CEBPA, CFLAR, CREB1, DDB1, E4F1, HBXIP, HSPD1/HSP60, NFKBIA, POLR2E and SMAD4. Interacts with host SMC5-SMC6 complex and induces its degradation. Interacts with host TRPC4AP; leading to prevent ubiquitination of TRPC4AP. Interacts with host PLSCR1; this interaction promotes ubiquitination and degradation of HBx and impairs HBx-mediated cell proliferation. Post-translationally, a fraction may be phosphorylated in insect cells and HepG2 cells, a human hepatoblastoma cell line. Phosphorylated in vitro by host protein kinase C or mitogen-activated protein kinase. N-acetylated in insect cells.

It is found in the host cytoplasm. It localises to the host nucleus. The protein resides in the host mitochondrion. Multifunctional protein that plays a role in silencing host antiviral defenses and promoting viral transcription. Does not seem to be essential for HBV infection. May be directly involved in development of cirrhosis and liver cancer (hepatocellular carcinoma). Most of cytosolic activities involve modulation of cytosolic calcium. The effect on apoptosis is controversial depending on the cell types in which the studies have been conducted. May induce apoptosis by localizing in mitochondria and causing loss of mitochondrial membrane potential. May also modulate apoptosis by binding host CFLAR, a key regulator of the death-inducing signaling complex (DISC). Promotes viral transcription by using the host E3 ubiquitin ligase DDB1 to target the SMC5-SMC6 complex to proteasomal degradation. This host complex would otherwise bind to viral episomal DNA, and prevents its transcription. Moderately stimulates transcription of many different viral and cellular transcription elements. Promoters and enhancers stimulated by HBx contain DNA binding sites for NF-kappa-B, AP-1, AP-2, c-EBP, ATF/CREB, or the calcium-activated factor NF-AT. The protein is Protein X of Woodchuck hepatitis B virus (isolate w64/pWS23) (WHV).